Reading from the N-terminus, the 429-residue chain is Ribosomal RNA small subunit methyltransferase B (429 aa).

S-adenosyl-L-methionine-binding positions include 254–260 (CSAPGGK), Asp277, Asp303, and Asp322. The Nucleophile role is filled by Cys375. Residues 397 to 419 (ALSETGTPDQPGQQNLPGGEEGD) are disordered. The span at 400–412 (ETGTPDQPGQQNL) shows a compositional bias: polar residues.

The protein belongs to the class I-like SAM-binding methyltransferase superfamily. RsmB/NOP family.

Its subcellular location is the cytoplasm. The catalysed reaction is cytidine(967) in 16S rRNA + S-adenosyl-L-methionine = 5-methylcytidine(967) in 16S rRNA + S-adenosyl-L-homocysteine + H(+). In terms of biological role, specifically methylates the cytosine at position 967 (m5C967) of 16S rRNA. The protein is Ribosomal RNA small subunit methyltransferase B of Salmonella dublin (strain CT_02021853).